Reading from the N-terminus, the 34-residue chain is Non-cysteinic peptide Bs 10 (34 aa).

The interval 1 to 34 is disordered; the sequence is VTMGYIKDGDGKKIAKKKNKNGRKHVEIDLNKVG. Residues 14-23 are compositionally biased toward basic residues; sequence IAKKKNKNGR. Basic and acidic residues predominate over residues 24–34; sequence KHVEIDLNKVG.

In terms of tissue distribution, expressed by the venom gland.

It is found in the secreted. The polypeptide is Non-cysteinic peptide Bs 10 (Hottentotta tamulus sindicus (Scorpion)).